The chain runs to 277 residues: Tetrahydroxynaphthalene reductase PfmaG (277 aa).

I36, D82, and N109 together coordinate NADP(+). Residues S158, S159, and Y173 each act as proton donor in the active site. Y173, K177, I206, and T208 together coordinate NADP(+). K177 serves as the catalytic Lowers pKa of active site Tyr.

It belongs to the short-chain dehydrogenases/reductases (SDR) family.

The catalysed reaction is scytalone + NADP(+) = naphthalene-1,3,6,8-tetrol + NADPH + H(+). The protein operates within pigment biosynthesis; melanin biosynthesis. In terms of biological role, tetrahydroxynaphthalene reductase; part of the gene cluster that mediates the biosynthesis of dihydroxynaphthalene (DHN)-melanin, a bluish-green pigment forming a dark layer in the conidial wall that protects the conidia from UV radiations. The first step of the pathway is the production of the pentaketide 1,3,6,8-tetrahydroxynaphthalene (1,3,6,8-THN or T4HN) by the polyketide synthase PfmaE though condensation of acetyl-CoA with malonyl-CoA. T4HN is not stable and easily oxidizes into the stable form flaviolin. T4HN is also substrate of the hydroxynaphthalene reductase PfmaG to yield scytalone. The scytalone dehydratase PfmaJ then reduces scytalone to 1,3,8-THN. 1,3,8-THN is then substrate of the hydroxynaphthalene reductase PfmaI to yield vermelone. Vermelone is further converted by the multicopper oxidase PfmaD to 1,8-DHN. Finally the laccase PFICI_06862 transforms 1,8-DHN to DHN-melanin. The roles of the 5-oxoprolinase PfmaA and the proline iminopeptidase PfmaB within the cluster have not been elucidated yet. The chain is Tetrahydroxynaphthalene reductase PfmaG from Pestalotiopsis fici (strain W106-1 / CGMCC3.15140).